The sequence spans 304 residues: Protoheme IX farnesyltransferase 1 (304 aa).

8 helical membrane passes run 24 to 44 (VVVL…KAPL), 47 to 67 (FVPW…AGAA), 99 to 119 (MALG…LAFT), 122 to 142 (LTAW…TGFL), 150 to 170 (IVIG…AITG), 176 to 196 (PLLL…ALCI), 228 to 248 (LVLF…LVYL), and 280 to 300 (YSIV…YLPL).

It belongs to the UbiA prenyltransferase family. Protoheme IX farnesyltransferase subfamily.

It localises to the cell inner membrane. It catalyses the reaction heme b + (2E,6E)-farnesyl diphosphate + H2O = Fe(II)-heme o + diphosphate. It participates in porphyrin-containing compound metabolism; heme O biosynthesis; heme O from protoheme: step 1/1. Its function is as follows. Converts heme B (protoheme IX) to heme O by substitution of the vinyl group on carbon 2 of heme B porphyrin ring with a hydroxyethyl farnesyl side group. This chain is Protoheme IX farnesyltransferase 1, found in Pseudomonas paraeruginosa (strain DSM 24068 / PA7) (Pseudomonas aeruginosa (strain PA7)).